A 353-amino-acid chain; its full sequence is Chorismate synthase (353 aa).

NADP(+) is bound by residues arginine 48 and arginine 54. Residues 125–127 (RSS), 238–239 (NA), glycine 278, 293–297 (KPTSS), and arginine 319 each bind FMN.

It belongs to the chorismate synthase family. As to quaternary structure, homotetramer. It depends on FMNH2 as a cofactor.

It carries out the reaction 5-O-(1-carboxyvinyl)-3-phosphoshikimate = chorismate + phosphate. The protein operates within metabolic intermediate biosynthesis; chorismate biosynthesis; chorismate from D-erythrose 4-phosphate and phosphoenolpyruvate: step 7/7. In terms of biological role, catalyzes the anti-1,4-elimination of the C-3 phosphate and the C-6 proR hydrogen from 5-enolpyruvylshikimate-3-phosphate (EPSP) to yield chorismate, which is the branch point compound that serves as the starting substrate for the three terminal pathways of aromatic amino acid biosynthesis. This reaction introduces a second double bond into the aromatic ring system. In Buchnera aphidicola subsp. Schizaphis graminum (strain Sg), this protein is Chorismate synthase.